The sequence spans 190 residues: Protein GrpE (190 aa).

The tract at residues 21–49 (DDLQEEVEATETEETVEEVIEETPEKSEL) is disordered. The span at 23–42 (LQEEVEATETEETVEEVIEE) shows a compositional bias: acidic residues.

The protein belongs to the GrpE family. In terms of assembly, homodimer.

Its subcellular location is the cytoplasm. Functionally, participates actively in the response to hyperosmotic and heat shock by preventing the aggregation of stress-denatured proteins, in association with DnaK and GrpE. It is the nucleotide exchange factor for DnaK and may function as a thermosensor. Unfolded proteins bind initially to DnaJ; upon interaction with the DnaJ-bound protein, DnaK hydrolyzes its bound ATP, resulting in the formation of a stable complex. GrpE releases ADP from DnaK; ATP binding to DnaK triggers the release of the substrate protein, thus completing the reaction cycle. Several rounds of ATP-dependent interactions between DnaJ, DnaK and GrpE are required for fully efficient folding. This chain is Protein GrpE, found in Streptococcus pyogenes serotype M3 (strain SSI-1).